The sequence spans 209 residues: Thymidine kinase (209 aa).

ATP contacts are provided by residues 25 to 32 and 103 to 106; these read GCMFAGKT and DEVQ. The active-site Proton acceptor is E104. Residues C160, C163, C198, and C201 each coordinate Zn(2+).

This sequence belongs to the thymidine kinase family. As to quaternary structure, homotetramer.

The protein resides in the cytoplasm. The enzyme catalyses thymidine + ATP = dTMP + ADP + H(+). In Mycoplasma mycoides subsp. mycoides SC (strain CCUG 32753 / NCTC 10114 / PG1), this protein is Thymidine kinase.